A 313-amino-acid chain; its full sequence is Methionyl-tRNA formyltransferase (313 aa).

S109 to P112 is a binding site for (6S)-5,6,7,8-tetrahydrofolate.

It belongs to the Fmt family.

The catalysed reaction is L-methionyl-tRNA(fMet) + (6R)-10-formyltetrahydrofolate = N-formyl-L-methionyl-tRNA(fMet) + (6S)-5,6,7,8-tetrahydrofolate + H(+). Its function is as follows. Attaches a formyl group to the free amino group of methionyl-tRNA(fMet). The formyl group appears to play a dual role in the initiator identity of N-formylmethionyl-tRNA by promoting its recognition by IF2 and preventing the misappropriation of this tRNA by the elongation apparatus. This is Methionyl-tRNA formyltransferase from Thermotoga maritima (strain ATCC 43589 / DSM 3109 / JCM 10099 / NBRC 100826 / MSB8).